Reading from the N-terminus, the 147-residue chain is Small ribosomal subunit protein uS5 (147 aa).

The S5 DRBM domain occupies 9-72; sequence FQEVVVNIGR…DDAFKNLIHV (64 aa).

The protein belongs to the universal ribosomal protein uS5 family. In terms of assembly, part of the 30S ribosomal subunit. Contacts proteins S4 and S8.

Its function is as follows. With S4 and S12 plays an important role in translational accuracy. In terms of biological role, located at the back of the 30S subunit body where it stabilizes the conformation of the head with respect to the body. The protein is Small ribosomal subunit protein uS5 of Helicobacter pylori (strain J99 / ATCC 700824) (Campylobacter pylori J99).